The following is a 279-amino-acid chain: Genome polyprotein (279 aa).

It belongs to the potyviridae genome polyprotein family. Post-translationally, genome polyprotein of potyviruses undergoes post-translational proteolytic processing by the main proteinase NIa-pro resulting in the production of at least ten individual proteins. The P1 proteinase and the HC-pro cleave only their respective C-termini autocatalytically. 6K1 is essential for proper proteolytic separation of P3 from CI.

Its subcellular location is the virion. The enzyme catalyses RNA(n) + a ribonucleoside 5'-triphosphate = RNA(n+1) + diphosphate. Its function is as follows. An RNA-dependent RNA polymerase that plays an essential role in the virus replication. Involved in aphid transmission, cell-to-cell and systemis movement, encapsidation of the viral RNA and in the regulation of viral RNA amplification. The sequence is that of Genome polyprotein from Solanum betaceum (Tamarillo).